The chain runs to 94 residues: MARSTKKGPFIDGHLMVKIEAMNQANDRKVVRTWSRRSTVHPDMVGHTIAVHNGKKFVPVYVTENMVGHKLGEFAPTRTFKGHAAKTESSSRAR.

It belongs to the universal ribosomal protein uS19 family.

In terms of biological role, protein S19 forms a complex with S13 that binds strongly to the 16S ribosomal RNA. This chain is Small ribosomal subunit protein uS19, found in Acidobacterium capsulatum (strain ATCC 51196 / DSM 11244 / BCRC 80197 / JCM 7670 / NBRC 15755 / NCIMB 13165 / 161).